Reading from the N-terminus, the 647-residue chain is Acetyl-coenzyme A synthetase (647 aa).

Residues 190 to 193, T310, and N334 contribute to the CoA site; that span reads RGGK. ATP contacts are provided by residues 386 to 388, 410 to 415, D499, and R514; these read GEP and DTWWQT. Residue S522 coordinates CoA. An ATP-binding site is contributed by R525. Residues V536, H538, and V541 each contribute to the Mg(2+) site. R583 is a CoA binding site. K608 is subject to N6-acetyllysine.

It belongs to the ATP-dependent AMP-binding enzyme family. Mg(2+) is required as a cofactor. Acetylated. Deacetylation by the SIR2-homolog deacetylase activates the enzyme.

It catalyses the reaction acetate + ATP + CoA = acetyl-CoA + AMP + diphosphate. Functionally, catalyzes the conversion of acetate into acetyl-CoA (AcCoA), an essential intermediate at the junction of anabolic and catabolic pathways. AcsA undergoes a two-step reaction. In the first half reaction, AcsA combines acetate with ATP to form acetyl-adenylate (AcAMP) intermediate. In the second half reaction, it can then transfer the acetyl group from AcAMP to the sulfhydryl group of CoA, forming the product AcCoA. The sequence is that of Acetyl-coenzyme A synthetase from Xanthomonas axonopodis pv. citri (strain 306).